The following is a 1934-amino-acid chain: Tudor domain-containing protein 15 (1934 aa).

6 consecutive Tudor domains span residues 59-117 (NVEI…LFEL), 289-347 (CDNF…FILV), 531-589 (KPEP…FCEL), 799-856 (PYEI…FLLL), 1011-1070 (DSNK…FPEL), and 1342-1401 (KPLV…FLTV). Residues 1490–1510 (VRPGDNEMKKGKSNESEGSMN) form a disordered region. Positions 1491 to 1504 (RPGDNEMKKGKSNE) are enriched in basic and acidic residues. 2 Tudor domains span residues 1574 to 1633 (SIEK…IRNI) and 1780 to 1838 (FIIP…PEEL).

The protein is Tudor domain-containing protein 15 (TDRD15) of Homo sapiens (Human).